A 188-amino-acid polypeptide reads, in one-letter code: Elongation factor P (188 aa).

The protein belongs to the elongation factor P family.

It localises to the cytoplasm. The protein operates within protein biosynthesis; polypeptide chain elongation. Functionally, involved in peptide bond synthesis. Stimulates efficient translation and peptide-bond synthesis on native or reconstituted 70S ribosomes in vitro. Probably functions indirectly by altering the affinity of the ribosome for aminoacyl-tRNA, thus increasing their reactivity as acceptors for peptidyl transferase. This Phenylobacterium zucineum (strain HLK1) protein is Elongation factor P.